The following is a 70-amino-acid chain: Large ribosomal subunit protein bL31 (70 aa).

C16, C18, C38, and C41 together coordinate Zn(2+).

The protein belongs to the bacterial ribosomal protein bL31 family. Type A subfamily. As to quaternary structure, part of the 50S ribosomal subunit. It depends on Zn(2+) as a cofactor.

Functionally, binds the 23S rRNA. The chain is Large ribosomal subunit protein bL31 from Mycolicibacterium gilvum (strain PYR-GCK) (Mycobacterium gilvum (strain PYR-GCK)).